Here is a 483-residue protein sequence, read N- to C-terminus: Krueppel-like factor 4 (483 aa).

Residues 22–42 (TFASGPAGREKTLRPAGAPTN) are disordered. Lys32 is covalently cross-linked (Glycyl lysine isopeptide (Lys-Gly) (interchain with G-Cter in ubiquitin)). The 9aaTAD motif lies at 99 to 107 (DLLDLDFIL). Ser251 is subject to Phosphoserine. The interval 294–395 (AGPQLSNGHR…KRGRRSWPRK (102 aa)) is disordered. Positions 338-356 (LPLPPGFHPHPGPNYPPFL) are enriched in pro residues. At Glu381 the chain carries 5-glutamyl polyglutamate. The segment covering 386–395 (KRGRRSWPRK) has biased composition (basic residues). Residues 386–483 (KRGRRSWPRK…HLALHMKRHF (98 aa)) are interaction with ZNF296. 3 C2H2-type zinc fingers span residues 400 to 424 (HTCD…LRTH), 430 to 454 (YHCD…YRKH), and 460 to 482 (FQCQ…MKRH). The tract at residues 443-474 (RSDELTRHYRKHTGHRPFQCQKCDRAFSRSDH) is interaction with target DNA.

This sequence belongs to the krueppel C2H2-type zinc-finger protein family. Interacts with MUC1 (via the C-terminal domain). Interacts with POU5F1/OCT4 and SOX2. Interacts with MEIS2 isoform MeisD and PBX1 isoform PBX1a. Interacts with ZNF296. Interacts with GLIS1. Interacts with BTRC; this interaction leads to KLF4 ubiquitination and subsequent degradation. Interacts with IPO7; the interaction facilitates nuclear translocation of KLF4 in dental papilla cells. Ubiquitinated. 'Lys-48'-linked ubiquitinated and targeted for proteasomal degradation by the SCF(BTRC) E3 ubiquitin-protein ligase complex, thereby negatively regulating cell pluripotency maintenance and embryogenesis. In terms of processing, polyglutamylated by TTLL1 and TTLL4 at Glu-381, which inhibits KLF4 binding with E3 ligase component BTRC, thereby impeding ubiquitination. Deglutamylated by CCP1 and CCP6; deglutamylation promotes KLF4 ubiquitination. KLF4 glutamylation state plays a critical role in the regulation of its function in cell reprogramming, pluripotency maintenance and embryogenesis. As to expression, highest expression in the colon. Lower levels in testis, lung and small intestine.

The protein resides in the nucleus. It localises to the cytoplasm. In terms of biological role, transcription factor; can act both as activator and as repressor. Binds the 5'-CACCC-3' core sequence. Binds to the promoter region of its own gene and can activate its own transcription. Regulates the expression of key transcription factors during embryonic development. Plays an important role in maintaining embryonic stem cells, and in preventing their differentiation. Required for establishing the barrier function of the skin and for postnatal maturation and maintenance of the ocular surface. Involved in the differentiation of epithelial cells and may also function in skeletal and kidney development. Contributes to the down-regulation of p53/TP53 transcription. The polypeptide is Krueppel-like factor 4 (Klf4) (Mus musculus (Mouse)).